A 304-amino-acid polypeptide reads, in one-letter code: Quorum-quenching protein AidA (304 aa).

This sequence belongs to the AB hydrolase superfamily.

Its function is as follows. Involved in quorum quenching (QQ). Inhibits motility and biofilm formation. Could contribute in bacterial competition, as it is capable of hydrolyzing the signaling molecules that mediate interspecies communication. The polypeptide is Quorum-quenching protein AidA (Acinetobacter baumannii (strain MDR-ZJ06)).